A 627-amino-acid chain; its full sequence is Neutral endopeptidase (627 aa).

The 627-residue stretch at 1 to 627 folds into the Peptidase M13 domain; sequence MTRIQDDLFA…RAPENRLKIW (627 aa). Residue His475 coordinates Zn(2+). Residue Glu476 is part of the active site. Residues His479 and Glu535 each coordinate Zn(2+). Residue Asp539 is the Proton donor of the active site.

This sequence belongs to the peptidase M13 family. In terms of assembly, monomer. Zn(2+) is required as a cofactor.

It is found in the cytoplasm. In terms of biological role, endopeptidase with broad substrate specificity for several oligopeptides. The sequence is that of Neutral endopeptidase (pepO) from Lactococcus lactis subsp. cremoris (Streptococcus cremoris).